We begin with the raw amino-acid sequence, 89 residues long: Ubiquinol-cytochrome-c reductase complex assembly factor 3 (89 aa).

Residues 1–7 are Mitochondrial matrix-facing; that stretch reads MEAARKA. The chain crosses the membrane as a helical span at residues 8–28; it reads LAVVAVLGAGGGVGSILFALV. Positions 23 to 80 are mediates lipid-binding; it reads ILFALVTPGELQKQLMLQEMPERDSRRRDEAVRTKELVMATLKDAAATKENVAWRRNW. Residues 29–89 lie on the Mitochondrial intermembrane side of the membrane; sequence TPGELQKQLM…WTVRGDGRSA (61 aa).

The protein belongs to the UQCC3 family. As to quaternary structure, associates with the ubiquinol-cytochrome c reductase complex (mitochondrial respiratory chain complex III(CIII) or cytochrome b-c1 complex). Interacts with UQCC1. Forms a complex, named COMC, composed of UQCC1, UQCC2; UQCC3 and UQCC4; mediates MT-CYB hemylation and association with the first nuclear-encoded complex III subunit UQCRQ. Probably cleaved by OMA1 under mitochondrial stress conditions.

It localises to the mitochondrion inner membrane. Its function is as follows. Required for the assembly of the ubiquinol-cytochrome c reductase complex (mitochondrial respiratory chain complex III or cytochrome b-c1 complex), mediating cytochrome b recruitment and probably stabilization within the complex. Thereby, plays an important role in ATP production by mitochondria. Cardiolipin-binding protein, it may also control the cardiolipin composition of mitochondria membranes and their morphology. The chain is Ubiquinol-cytochrome-c reductase complex assembly factor 3 from Rattus norvegicus (Rat).